Here is a 189-residue protein sequence, read N- to C-terminus: MAKQRVINIRGTSGSGKSTLIRRLVELYPEKEPVHVPDRKQPLFYKLRGDGLLPLSLLGHYETACGGCDTIPSMDRIYELVRERLAEGDSVLYEGLLISAEVNRAVALHTDGFDLTVVRLNTPLELCVDSVNQRRWAKNPDKPGVNPKNTEAKFKQTLATCKKLDAAGIPVVEADRDGAFHAIKQLLEA.

It belongs to the thymidylate kinase family. 5-hmdU DNA kinase subfamily.

It catalyses the reaction 5-hydroxymethyl-dUMP in DNA + ATP = 5-phosphomethyl-dUMP in DNA + ADP + H(+). Phosphorylates 5-hydroxymethyluracil (5hmdU) into 5-phosphomethyl-2'-deoxyuridine (5- PmdU) on DNA as a step in the pathway leading to thymidine hypermodifications in the viral genome. The phosphate is added internally to the DNA polymer. As a final result of the pathway of hypermodification, 5-AcNmdU substitutes for a subset of thymidines in the viral DNA. These modifications probably prevent degradation of viral genome by the host restriction-modification antiviral defense system. The protein is 5-hmdU DNA kinase of Pseudomonas phage PaMx11.